The primary structure comprises 557 residues: Dihydroxy-acid dehydratase (557 aa).

Residue Asp78 participates in Mg(2+) binding. Residue Cys119 participates in [2Fe-2S] cluster binding. Mg(2+)-binding residues include Asp120 and Lys121. Lys121 is subject to N6-carboxylysine. Cys191 is a [2Fe-2S] cluster binding site. Glu442 serves as a coordination point for Mg(2+). Ser468 serves as the catalytic Proton acceptor.

This sequence belongs to the IlvD/Edd family. In terms of assembly, homodimer. [2Fe-2S] cluster is required as a cofactor. It depends on Mg(2+) as a cofactor.

The catalysed reaction is (2R)-2,3-dihydroxy-3-methylbutanoate = 3-methyl-2-oxobutanoate + H2O. It carries out the reaction (2R,3R)-2,3-dihydroxy-3-methylpentanoate = (S)-3-methyl-2-oxopentanoate + H2O. It functions in the pathway amino-acid biosynthesis; L-isoleucine biosynthesis; L-isoleucine from 2-oxobutanoate: step 3/4. It participates in amino-acid biosynthesis; L-valine biosynthesis; L-valine from pyruvate: step 3/4. Its function is as follows. Functions in the biosynthesis of branched-chain amino acids. Catalyzes the dehydration of (2R,3R)-2,3-dihydroxy-3-methylpentanoate (2,3-dihydroxy-3-methylvalerate) into 2-oxo-3-methylpentanoate (2-oxo-3-methylvalerate) and of (2R)-2,3-dihydroxy-3-methylbutanoate (2,3-dihydroxyisovalerate) into 2-oxo-3-methylbutanoate (2-oxoisovalerate), the penultimate precursor to L-isoleucine and L-valine, respectively. The sequence is that of Dihydroxy-acid dehydratase from Lachnoclostridium phytofermentans (strain ATCC 700394 / DSM 18823 / ISDg) (Clostridium phytofermentans).